The chain runs to 123 residues: Large ribosomal subunit protein bL12 (123 aa).

The protein belongs to the bacterial ribosomal protein bL12 family. In terms of assembly, homodimer. Part of the ribosomal stalk of the 50S ribosomal subunit. Forms a multimeric L10(L12)X complex, where L10 forms an elongated spine to which 2 to 4 L12 dimers bind in a sequential fashion. Binds GTP-bound translation factors.

Forms part of the ribosomal stalk which helps the ribosome interact with GTP-bound translation factors. Is thus essential for accurate translation. In Rhodopseudomonas palustris (strain BisB5), this protein is Large ribosomal subunit protein bL12.